The following is a 220-amino-acid chain: MAILFAVVARGTTILAKHAWCGGNFLEVTEQILAKIPSENNKLTYSHGNYLFHYICQDRIVYLCITDDDFERSRAFSFLNEVKKRFQTTYGSRAQTALPYAMNSEFSSVLAAQLKHHSENKSLDKVMETQAQVDELKGIMVRNIDLVAQRGERLELLIDKTENLVDSSVTFKTTSRNLARAMCMKNIKLTIIIIIVSIVFIYIIVSLLCGGFTWPNCVKK.

The residue at position 2 (Ala2) is an N-acetylalanine. The Cytoplasmic portion of the chain corresponds to Ala2–Lys188. The Longin domain maps to Val7–Leu110. The region spanning Lys125 to Lys185 is the v-SNARE coiled-coil homology domain. A phosphoserine mark is found at Ser167 and Ser168. A helical; Anchor for type IV membrane protein membrane pass occupies residues Leu189–Cys209. Residues Gly210–Lys220 are Vesicular-facing.

It belongs to the synaptobrevin family. Component of the SNARE complex composed of STX4, SNAP23 and VAMP7 that binds SYT7 during lysosomal exocytosis. Component of the SNARE complex composed of STX7, STX8, VAMP7 and VTI1B that is required for heterotypic fusion of late endosomes with lysosomes. May interact with STX17. Interacts with PICALM. Interacts with RAB21.

The protein resides in the cytoplasmic vesicle. It localises to the secretory vesicle membrane. It is found in the golgi apparatus. Its subcellular location is the trans-Golgi network membrane. The protein localises to the late endosome membrane. The protein resides in the lysosome membrane. It localises to the endoplasmic reticulum membrane. It is found in the phagosome membrane. Its subcellular location is the synapse. The protein localises to the synaptosome. In terms of biological role, involved in the targeting and/or fusion of transport vesicles to their target membrane during transport of proteins from the early endosome to the lysosome. Required for heterotypic fusion of late endosomes with lysosomes and homotypic lysosomal fusion. Required for calcium regulated lysosomal exocytosis. Involved in the export of chylomicrons from the endoplasmic reticulum to the cis Golgi. Required for exocytosis of mediators during eosinophil and neutrophil degranulation, and target cell killing by natural killer cells. Required for focal exocytosis of late endocytic vesicles during phagosome formation. The protein is Vesicle-associated membrane protein 7 (Vamp7) of Mus musculus (Mouse).